The primary structure comprises 1205 residues: Solute carrier family 12 member 2 (1205 aa).

Methionine 1 bears the N-acetylmethionine mark. Residues 1–22 (MEPGPARPRLAPAARPGWGRAA) show a composition bias toward low complexity. The segment at 1–102 (MEPGPARPRL…AAAAAAAAAA (102 aa)) is disordered. Residues 1–279 (MEPGPARPRL…AESKGVVKFG (279 aa)) lie on the Cytoplasmic side of the membrane. A compositionally biased stretch (basic residues) spans 23-35 (GCRRRGGPARHGR). Phosphoserine is present on residues serine 74 and serine 76. Residues 77–80 (RFQV) carry the RFXV motif 1 motif. A compositionally biased stretch (low complexity) spans 87 to 102 (AGRAAAAAAAAAAAAA). The RFXV motif 2 motif lies at 133 to 136 (RFRV). Over residues 143 to 155 (ASSSADDSLSDAA) the composition is skewed to low complexity. The disordered stretch occupies residues 143 to 187 (ASSSADDSLSDAAGVGGDGPNVSFQNGGDTVLSEGSSLHSGGGSG). Phosphothreonine is present on residues threonine 196, threonine 200, threonine 205, threonine 210, and threonine 223. A Phosphoserine modification is found at serine 235. Threonine 259 is modified (phosphothreonine). Residues 280 to 309 (WIKGVLVRCMLNIWGVMLFIRLSWIVGQAG) traverse the membrane as a discontinuously helical segment. Leucine 290 is a Na(+) binding site. K(+) contacts are provided by asparagine 291 and isoleucine 292. Tryptophan 293 contacts Na(+). The chloride site is built by glycine 294, valine 295, and methionine 296. The helical transmembrane segment at 310-329 (IGLSVVVIAMATVVTTITGL) threads the bilayer. The Cytoplasmic segment spans residues 330-360 (STSAIATNGFVRGGGAYYLISRSLGPEFGGA). The chain crosses the membrane as a helical span at residues 361–388 (IGLIFAFANAVAVAMYVVGFAETVVELL). Phenylalanine 365 contacts chloride. Tyrosine 376 lines the K(+) pocket. Over 389–398 (KEHSILMIDE) the chain is Extracellular. Residues 399–422 (INDIRIIGAITVVILLGISVAGME) traverse the membrane as a helical segment. Residues 423–425 (WEA) lie on the Cytoplasmic side of the membrane. Residues 426–447 (KAQIVLLVILLLAIADFVIGTF) traverse the membrane as a helical segment. Residues 448-479 (ISLESKKPKGFFGYKSEIFNENFGPDFREEET) are Extracellular-facing. Residues 480–497 (FFSVFAIFFPAATGILAG) traverse the membrane as a discontinuously helical segment. Proline 489, alanine 490, and threonine 492 together coordinate K(+). Positions 489 and 490 each coordinate chloride. Glycine 493 and isoleucine 494 together coordinate chloride. The Cytoplasmic segment spans residues 498–512 (ANISGDLADPQSAIP). A helical membrane pass occupies residues 513–534 (KGTLLAILITTVVYIGIAVSVG). The Extracellular portion of the chain corresponds to 535 to 591 (SCVVRDATGNVNDTITTELTNCTSAACKLNFDFSYCESNTCSYGLMNNFQVMSMVSG). Residues asparagine 546 and asparagine 555 are each glycosylated (N-linked (GlcNAc...) asparagine). 2 disulfide bridges follow: cysteine 556-cysteine 561 and cysteine 570-cysteine 575. The helical transmembrane segment at 592–616 (FAPLISAGIFSATLSSALASLVSAP) threads the bilayer. Na(+) is bound by residues alanine 603, serine 606, and serine 607. Residues 617 to 644 (KIFQALCKDNIYPAFQMFAKGYGKNNEP) lie on the Cytoplasmic side of the membrane. Transmembrane regions (helical) follow at residues 645–665 (LRGY…AELN) and 666–684 (VIAP…LINF). Positions 675 and 679 each coordinate chloride. Topologically, residues 685–707 (SVFHASLAKSPGWRPAFKYYNMW) are cytoplasmic. Helical transmembrane passes span 708–725 (ISLI…VINW) and 726–738 (WAAL…VLGL). Over 739 to 1205 (YIYVTYKKPD…NHQSVLTFYS (467 aa)) the chain is Cytoplasmic. The interval 754–771 (STQALTYLSALQHSIRLS) is scissor helix. Serine 933 and serine 937 each carry phosphoserine. A disordered region spans residues 953–986 (SDQDTCKSSGEKSITQKDEEEDGKTPTQPLLKKE). The residue at position 987 (serine 987) is a Phosphoserine.

Belongs to the SLC12A transporter family. As to quaternary structure, homodimer; adopts a domain-swap conformation at the scissor helices connecting the transmembrane domain and C-terminal domain. In terms of processing, phosphorylated at Thr-196, Thr-200 and Thr-205 by OXSR1/OSR1 and STK39/SPAK downstream of WNK kinases (WNK1, WNK2, WNK3 or WNK4), promoting its activity. As to expression, widely expressed. High expression found in the cochlea, cochlear lateral wall, and the choroid plexus. Lower expression found in the cerebellum and the cortex.

It is found in the basolateral cell membrane. It catalyses the reaction K(+)(out) + 2 chloride(out) + Na(+)(out) = K(+)(in) + 2 chloride(in) + Na(+)(in). Activated following phosphorylation by OXSR1/OSR1 and STK39/SPAK downstream of WNK kinases (WNK1, WNK2, WNK3 or WNK4). Inhibited by bumetanide and furosemide. Its function is as follows. Cation-chloride cotransporter which mediates the electroneutral transport of chloride, potassium and/or sodium ions across the membrane. Plays a vital role in the regulation of ionic balance and cell volume. In Mus musculus (Mouse), this protein is Solute carrier family 12 member 2 (Slc12a2).